Reading from the N-terminus, the 193-residue chain is Xanthine phosphoribosyltransferase (193 aa).

Positions 20 and 27 each coordinate xanthine. 128 to 132 (ANGQA) serves as a coordination point for 5-phospho-alpha-D-ribose 1-diphosphate. K156 provides a ligand contact to xanthine.

The protein belongs to the purine/pyrimidine phosphoribosyltransferase family. Xpt subfamily. As to quaternary structure, homodimer.

It localises to the cytoplasm. The enzyme catalyses XMP + diphosphate = xanthine + 5-phospho-alpha-D-ribose 1-diphosphate. The protein operates within purine metabolism; XMP biosynthesis via salvage pathway; XMP from xanthine: step 1/1. Functionally, converts the preformed base xanthine, a product of nucleic acid breakdown, to xanthosine 5'-monophosphate (XMP), so it can be reused for RNA or DNA synthesis. The protein is Xanthine phosphoribosyltransferase of Streptococcus pyogenes serotype M49 (strain NZ131).